We begin with the raw amino-acid sequence, 308 residues long: D-alanine--D-alanine ligase (308 aa).

The region spanning 103–302 (KTVMATAGVP…FDELVQWMVE (200 aa)) is the ATP-grasp domain. An ATP-binding site is contributed by 130–184 (MAPPYVIKPVADGSSVGVFMVTEAHEHPPQELFRDDWPHGEQLLVEKYVAGKELT). Residues D252, E269, and N271 each contribute to the Mg(2+) site.

It belongs to the D-alanine--D-alanine ligase family. It depends on Mg(2+) as a cofactor. Mn(2+) is required as a cofactor.

The protein resides in the cytoplasm. It catalyses the reaction 2 D-alanine + ATP = D-alanyl-D-alanine + ADP + phosphate + H(+). It functions in the pathway cell wall biogenesis; peptidoglycan biosynthesis. Functionally, cell wall formation. This Rhodopseudomonas palustris (strain BisB18) protein is D-alanine--D-alanine ligase.